Here is a 607-residue protein sequence, read N- to C-terminus: Discoidin-inducing complex subunit B (607 aa).

The signal sequence occupies residues 1–19; that stretch reads MNKKIIILIYLIFIKSIVG. Residues 20 to 554 lie on the Extracellular side of the membrane; the sequence is QNPVWIGGSG…LGTDGISKGS (535 aa). N-linked (GlcNAc...) asparagine glycans are attached at residues N75, N161, N215, N276, N277, N307, N324, N453, N477, and N527. Residues 555–575 form a helical membrane-spanning segment; it reads LAGISVSMVALACFVSLGVWW. The Cytoplasmic portion of the chain corresponds to 576-607; that stretch reads KTSKKNDQRNDSQVLTNFSQNKSDDIDVERKL.

Forms a complex with psiF/dicA.

It localises to the membrane. Its subcellular location is the secreted. Its function is as follows. Component of a complex that acts as a quorum sensing protein regulating discoidin gene expression during growth and development. Its function in the complex is unclear as it has no ability to induce discoidin during growth and development by itself. The protein is Discoidin-inducing complex subunit B (dicB) of Dictyostelium discoideum (Social amoeba).